The following is a 239-amino-acid chain: 2-C-methyl-D-erythritol 4-phosphate cytidylyltransferase (239 aa).

This sequence belongs to the IspD/TarI cytidylyltransferase family. IspD subfamily.

It carries out the reaction 2-C-methyl-D-erythritol 4-phosphate + CTP + H(+) = 4-CDP-2-C-methyl-D-erythritol + diphosphate. Its pathway is isoprenoid biosynthesis; isopentenyl diphosphate biosynthesis via DXP pathway; isopentenyl diphosphate from 1-deoxy-D-xylulose 5-phosphate: step 2/6. Catalyzes the formation of 4-diphosphocytidyl-2-C-methyl-D-erythritol from CTP and 2-C-methyl-D-erythritol 4-phosphate (MEP). In Ruthia magnifica subsp. Calyptogena magnifica, this protein is 2-C-methyl-D-erythritol 4-phosphate cytidylyltransferase.